Consider the following 231-residue polypeptide: Octanoyltransferase (231 aa).

Residues 49-227 (PHLPEAVWLL…ALAARFHLAW (179 aa)) enclose the BPL/LPL catalytic domain. Substrate-binding positions include 91-98 (RGGEVTHH), 158-160 (AIG), and 171-173 (GLA). Cys189 serves as the catalytic Acyl-thioester intermediate.

Belongs to the LipB family.

The protein resides in the cytoplasm. It carries out the reaction octanoyl-[ACP] + L-lysyl-[protein] = N(6)-octanoyl-L-lysyl-[protein] + holo-[ACP] + H(+). It participates in protein modification; protein lipoylation via endogenous pathway; protein N(6)-(lipoyl)lysine from octanoyl-[acyl-carrier-protein]: step 1/2. Its function is as follows. Catalyzes the transfer of endogenously produced octanoic acid from octanoyl-acyl-carrier-protein onto the lipoyl domains of lipoate-dependent enzymes. Lipoyl-ACP can also act as a substrate although octanoyl-ACP is likely to be the physiological substrate. This Parasynechococcus marenigrum (strain WH8102) protein is Octanoyltransferase.